The following is a 321-amino-acid chain: GDP-L-fucose synthase (321 aa).

14–20 (GGSGLVG) provides a ligand contact to NADP(+). Catalysis depends on Tyr-143, which acts as the Proton donor/acceptor. NADP(+) contacts are provided by residues Lys-147, 170–173 (PTNV), and His-186. Substrate-binding residues include Lys-194, Trp-208, Arg-215, and Asp-277.

This sequence belongs to the NAD(P)-dependent epimerase/dehydratase family. Fucose synthase subfamily. As to quaternary structure, homodimer.

It catalyses the reaction GDP-beta-L-fucose + NADP(+) = GDP-4-dehydro-alpha-D-rhamnose + NADPH + H(+). Its pathway is nucleotide-sugar biosynthesis; GDP-L-fucose biosynthesis via de novo pathway; GDP-L-fucose from GDP-alpha-D-mannose: step 2/2. In terms of biological role, catalyzes the two-step NADP-dependent conversion of GDP-4-dehydro-6-deoxy-D-mannose to GDP-fucose, involving an epimerase and a reductase reaction. In Homo sapiens (Human), this protein is GDP-L-fucose synthase.